Consider the following 503-residue polypeptide: Serine/threonine-protein kinase chk-1 (503 aa).

The region spanning Y24–Y286 is the Protein kinase domain. Residues L30 to V38 and K54 contribute to the ATP site. The active-site Proton acceptor is the D150. The disordered stretch occupies residues S320–P346. Positions E331–P346 are enriched in polar residues. S344 is modified (phosphoserine).

The protein belongs to the protein kinase superfamily. CAMK Ser/Thr protein kinase family. NIM1 subfamily. Expressed in the germline.

Its subcellular location is the cytoplasm. The protein resides in the nucleus. It localises to the perinuclear region. It catalyses the reaction L-seryl-[protein] + ATP = O-phospho-L-seryl-[protein] + ADP + H(+). The catalysed reaction is L-threonyl-[protein] + ATP = O-phospho-L-threonyl-[protein] + ADP + H(+). Its function is as follows. Serine/threonine-protein kinase which is required for checkpoint-mediated cell cycle arrest and activation of DNA repair in response to the presence of DNA damage or unreplicated DNA. May also negatively regulate cell cycle progression during unperturbed cell cycles. Required for checkpoint mediated cell cycle arrest in response to DNA damage in germline cells. Delays cell-cycle reentry of the Z2 and Z3 primordial germ cells in response to transcription-induced DNA damage as they emerge from cell cycle arrest in L1 larvae. Essential for embryogenesis. The polypeptide is Serine/threonine-protein kinase chk-1 (Caenorhabditis elegans).